The following is a 116-amino-acid chain: Peptidyl-tRNA hydrolase (116 aa).

This sequence belongs to the PTH2 family.

The protein localises to the cytoplasm. It catalyses the reaction an N-acyl-L-alpha-aminoacyl-tRNA + H2O = an N-acyl-L-amino acid + a tRNA + H(+). Its function is as follows. The natural substrate for this enzyme may be peptidyl-tRNAs which drop off the ribosome during protein synthesis. The protein is Peptidyl-tRNA hydrolase (pth) of Methanococcus maripaludis (strain DSM 14266 / JCM 13030 / NBRC 101832 / S2 / LL).